The sequence spans 244 residues: Histone H1, orphon (244 aa).

Residues 1-21 (MSDPAPEIEAPVEAAPVASPP) are compositionally biased toward low complexity. Disordered regions lie at residues 1 to 59 (MSDP…PVSE) and 113 to 244 (QAKG…KKAK). The span at 35–45 (PKAEKPKSDKP) shows a compositional bias: basic and acidic residues. The region spanning 53–127 (THPPVSEMVV…GASGSFKLPP (75 aa)) is the H15 domain. A compositionally biased stretch (low complexity) spans 186 to 203 (AKPASKKAAAPKPKAAKP). A compositionally biased stretch (basic residues) spans 213 to 244 (ATKAAAKKPVAKPVAKKPAAKPAKKPAAKKAK).

It belongs to the histone H1/H5 family.

The protein resides in the nucleus. Its subcellular location is the chromosome. Functionally, histones H1 are necessary for the condensation of nucleosome chains into higher-order structures. This chain is Histone H1, orphon, found in Chironomus thummi thummi (Midge).